The primary structure comprises 108 residues: uncharacterized protein (108 aa).

The disordered stretch occupies residues 56–108; the sequence is ELPSRGCLPAPRPESGQGRLSTGISQNGGRSSAQPCPRCIAGESGHFSHTKNH. Positions 73–89 are enriched in polar residues; it reads GRLSTGISQNGGRSSAQ.

This is an uncharacterized protein from Homo sapiens (Human).